Here is a 321-residue protein sequence, read N- to C-terminus: Chloroplastic calcium uniporter protein (321 aa).

Residues 1–56 constitute a chloroplast transit peptide; sequence MSSKKSLVQSLFNISKTYSRISGLTRMRPTKSGGIPPDAGDSGIRRRFLHKRAFFS. Helical transmembrane passes span 223–243 and 249–269; these read LWAG…LTFW and VMEP…YAFF. Positions 247–255 match the Selectivity filter motif; sequence WDVMEPICF. Glu-251 lines the Ca(2+) pocket.

The protein belongs to the MCU (TC 1.A.77) family.

The protein resides in the plastid. Its subcellular location is the chloroplast membrane. It carries out the reaction Ca(2+)(in) = Ca(2+)(out). In terms of biological role, chloroplastic membrane calcium uniporter that mediates calcium uptake into chloroplast stroma. Constitutes a pore-forming and calcium-conducting subunit. Chloroplastic calcium homeostasis plays key roles in cellular physiology. Promotes calcium uptake into chloroplast stroma in response to osmotic-stress, fine-tuning cytosolic MAPK3/MAPK6 phosphorylation and affecting stomata opening. The protein is Chloroplastic calcium uniporter protein of Arabidopsis thaliana (Mouse-ear cress).